A 30-amino-acid polypeptide reads, in one-letter code: Chassatide C9 (30 aa).

Positions 1 to 30 (GIPCGESCVFIPCVTTVIGCSCKDKVCYNN) form a cross-link, cyclopeptide (Gly-Asn). Disulfide bonds link Cys-4–Cys-20, Cys-8–Cys-22, and Cys-13–Cys-27.

This is a cyclic peptide.

In terms of biological role, probably participates in a plant defense mechanism. This chain is Chassatide C9, found in Chassalia chartacea (Chassalia curviflora).